The following is a 552-amino-acid chain: Hyaluronan synthase 2 (552 aa).

At 1–11 (MHCERFLCILR) the chain is on the cytoplasmic side. Residues 12–32 (IIGTTLFGVSLLLGITAAYIV) traverse the membrane as a helical segment. Residues 33–45 (GYQFIQTDNYYFS) are Extracellular-facing. Residues 46–66 (FGLYGAFLASHLIIQSLFAFL) form a helical membrane-spanning segment. The Cytoplasmic segment spans residues 67–374 (EHRKMKKSLE…NAMWFHKHHL (308 aa)). Thr-110 is modified (phosphothreonine). Residue Lys-190 forms a Glycyl lysine isopeptide (Lys-Gly) (interchain with G-Cter in ubiquitin) linkage. Ser-221 is a glycosylation site (O-linked (GlcNAc) serine). The residue at position 328 (Thr-328) is a Phosphothreonine. Residues 375 to 395 (WMTYEAIITGFFPFFLIATVI) traverse the membrane as a helical segment. Residues 396 to 402 (QLFYRGK) are Extracellular-facing. A helical membrane pass occupies residues 403-423 (IWNILLFLLTVQLVGLIKSSF). Residues 424–429 (ASCLRG) are Cytoplasmic-facing. The helical transmembrane segment at 430–450 (NIVMVFMSLYSVLYMSSLLPA) threads the bilayer. The Extracellular portion of the chain corresponds to 451–475 (KMFAIATINKAGWGTSGRKTIVVNF). A helical transmembrane segment spans residues 476 to 496 (IGLIPVSVWFTILLGGVIFTI). Residues 497 to 510 (YKESKRPFSESKQT) lie on the Cytoplasmic side of the membrane. The helical transmembrane segment at 511–531 (VLIVGTLLYACYWVMLLTLYV) threads the bilayer. Residues 532-552 (VLINKCGRRKKGQQYDMVLDV) lie on the Extracellular side of the membrane.

Belongs to the NodC/HAS family. Homodimer; dimerization promotes enzymatic activity. Forms heterodimer with HAS3. Forms heterodimer with HAS1. Mg(2+) serves as cofactor. In terms of processing, phosphorylation at Thr-328 is essential for hyaluronan synthase activity. Phosphorylation at Thr-110 is required for transport from ER to Golgi. Post-translationally, O-GlcNAcylation at Ser-221 increases the stability of HAS2 and plasma membrane localization. Ubiquitination at Lys-190; this ubiquitination is essential for hyaluronan synthase activity and homo- or hetero-oligomerization. Can also be poly-ubiquitinated. Deubiquitinated by USP17 and USP4. USP17 efficiently removes 'Lys-63'- and 'Lys-48'-linked polyubiquitin chains, whereas USP4 preferentially removes monoubiquitination and, partially, both 'Lys-63'- and 'Lys-48'-linked polyubiquitin chain. Expressed in fibroblasts.

It localises to the cell membrane. The protein resides in the endoplasmic reticulum membrane. It is found in the vesicle. The protein localises to the golgi apparatus membrane. Its subcellular location is the lysosome. The catalysed reaction is [hyaluronan](n) + UDP-N-acetyl-alpha-D-glucosamine = N-acetyl-beta-D-glucosaminyl-(1-&gt;4)-[hyaluronan](n) + UDP + H(+). The enzyme catalyses N-acetyl-beta-D-glucosaminyl-(1-&gt;4)-[hyaluronan](n) + UDP-alpha-D-glucuronate = [hyaluronan](n+1) + UDP + H(+). It functions in the pathway glycan biosynthesis; hyaluronan biosynthesis. With respect to regulation, regulated by several post-translational modifications such as ubiquitination/deubiquitination, phosphorylation and O-GlcNAcylation. The enzymatic activity depends on the availability of UDP-GlcUA and UDP-GlcNAc. Catalyzes the addition of GlcNAc or GlcUA monosaccharides to the nascent hyaluronan polymer. Therefore, it is essential to hyaluronan synthesis a major component of most extracellular matrices that has a structural role in tissues architectures and regulates cell adhesion, migration and differentiation. This is one of three isoenzymes responsible for cellular hyaluronan synthesis and it is particularly responsible for the synthesis of high molecular mass hyaluronan. The chain is Hyaluronan synthase 2 from Homo sapiens (Human).